A 239-amino-acid chain; its full sequence is Large ribosomal subunit protein eL32 (239 aa).

2 stretches are compositionally biased toward acidic residues: residues 1-12 (MSDENDTPEELA) and 67-91 (VEAD…ADVE). Disordered stretches follow at residues 1–23 (MSDE…SKAE) and 64–178 (GLEV…HPSG). The span at 92–113 (TELRARGLTEKTPDLSEDEQRL) shows a compositional bias: basic and acidic residues. A compositionally biased stretch (basic residues) spans 130–155 (YHKKKRTPTSWRRPKGTLSKQRRGIK).

Belongs to the eukaryotic ribosomal protein eL32 family.

This is Large ribosomal subunit protein eL32 (rpl32e) from Halobacterium salinarum (strain ATCC 700922 / JCM 11081 / NRC-1) (Halobacterium halobium).